We begin with the raw amino-acid sequence, 368 residues long: Molybdenum import ATP-binding protein ModC (368 aa).

An ABC transporter domain is found at Met-1 to Ser-230. An ATP-binding site is contributed by Gly-32–Thr-39. In terms of domain architecture, Mop spans Ala-291–Asp-362.

It belongs to the ABC transporter superfamily. Molybdate importer (TC 3.A.1.8) family. The complex is composed of two ATP-binding proteins (ModC), two transmembrane proteins (ModB) and a solute-binding protein (ModA).

The protein resides in the cell inner membrane. The catalysed reaction is molybdate(out) + ATP + H2O = molybdate(in) + ADP + phosphate + H(+). Its function is as follows. Part of the ABC transporter complex ModABC involved in molybdenum import. Responsible for energy coupling to the transport system. The polypeptide is Molybdenum import ATP-binding protein ModC (Vibrio parahaemolyticus serotype O3:K6 (strain RIMD 2210633)).